Consider the following 360-residue polypeptide: RGG repeats nuclear RNA binding protein B (360 aa).

Disordered stretches follow at residues 1–216 and 250–360; these read MASV…DKEM and MQQL…TLGK. Alanine 2 bears the N-acetylalanine mark. The span at 58–77 shows a compositional bias: gly residues; that stretch reads PGGGRGAGRGGSYGRGGRGG. 2 stretches are compositionally biased toward basic and acidic residues: residues 99–108 and 132–157; these read RRSEEGDGAR and DSER…RDGA. A compositionally biased stretch (polar residues) spans 162-176; that stretch reads WGTTQDDITPVTEES. 3 stretches are compositionally biased toward basic and acidic residues: residues 184–216, 258–283, and 311–336; these read LTVE…DKEM, SNND…EKTR, and REGR…RNQR. Residues 223–288 form the FF domain; that stretch reads KVLEEKKKAL…EEKTRKSLSI (66 aa). Serine 258 carries the phosphoserine modification.

Belongs to the SERBP1-HABP4 family.

The protein resides in the nucleus. It localises to the cytoplasm. The protein localises to the perinuclear region. In terms of biological role, ribosome-binding protein that acts as a regulator of mRNA translation by promoting ribosome inactivation. Binds RNA. This Arabidopsis thaliana (Mouse-ear cress) protein is RGG repeats nuclear RNA binding protein B.